A 313-amino-acid polypeptide reads, in one-letter code: MTPPTTQNGPLRHFLQFKDFSPAEIAYVLERTRIIKDKFKRYEPHMPLHDRTLAMVFEKASTRTRVSFEAGMYQMGGSVINLTSNDSQLGRSEPIEDTARVISRMVDIVMIRTFEQTRIERFASHSRVPVINGLTNEYHPCQILADIFTYIEHRGPIAGKTVAWIGDANNMSYTWLQAAEMLGFTLHVSTPAGYELDPARIGAPAAGVLKQFKDPMQACQGAHLVTTDVWTSMGYEAENEERRAAFADWCVDAEMMAAADPQAVFMHCLPAHRGEEVTGEVIDGAQSVVWDEAENRLHVQKALMEFLLLGQLA.

Carbamoyl phosphate-binding positions include 61–64 (STRT), Q88, R112, and 139–142 (HPCQ). Residues N170, D228, and 232–233 (SM) contribute to the L-ornithine site. Carbamoyl phosphate contacts are provided by residues 268–269 (CL) and R296.

Belongs to the aspartate/ornithine carbamoyltransferase superfamily. OTCase family.

The protein localises to the cytoplasm. The catalysed reaction is carbamoyl phosphate + L-ornithine = L-citrulline + phosphate + H(+). The protein operates within amino-acid biosynthesis; L-arginine biosynthesis; L-arginine from L-ornithine and carbamoyl phosphate: step 1/3. In terms of biological role, reversibly catalyzes the transfer of the carbamoyl group from carbamoyl phosphate (CP) to the N(epsilon) atom of ornithine (ORN) to produce L-citrulline. The polypeptide is Ornithine carbamoyltransferase (Bordetella parapertussis (strain 12822 / ATCC BAA-587 / NCTC 13253)).